The chain runs to 662 residues: Fructose-1,6-bisphosphatase class 3 (662 aa).

This sequence belongs to the FBPase class 3 family. Requires Mn(2+) as cofactor.

It catalyses the reaction beta-D-fructose 1,6-bisphosphate + H2O = beta-D-fructose 6-phosphate + phosphate. It functions in the pathway carbohydrate biosynthesis; gluconeogenesis. This chain is Fructose-1,6-bisphosphatase class 3, found in Clostridium tetani (strain Massachusetts / E88).